Consider the following 305-residue polypeptide: Serine/threonine-protein phosphatase PP2A catalytic subunit (305 aa).

4 residues coordinate Mn(2+): aspartate 53, histidine 55, aspartate 81, and asparagine 113. Catalysis depends on histidine 114, which acts as the Proton donor. The Mn(2+) site is built by histidine 163 and histidine 237.

Belongs to the PPP phosphatase family. PP-2A subfamily. Mn(2+) is required as a cofactor.

The enzyme catalyses O-phospho-L-seryl-[protein] + H2O = L-seryl-[protein] + phosphate. The catalysed reaction is O-phospho-L-threonyl-[protein] + H2O = L-threonyl-[protein] + phosphate. This Helianthus annuus (Common sunflower) protein is Serine/threonine-protein phosphatase PP2A catalytic subunit.